Consider the following 167-residue polypeptide: Transcriptional regulator MraZ (167 aa).

SpoVT-AbrB domains lie at 8–51 (ESHH…YGDH) and 92–135 (SLPT…KPET).

It belongs to the MraZ family. In terms of assembly, forms oligomers.

It is found in the cytoplasm. The protein localises to the nucleoid. The polypeptide is Transcriptional regulator MraZ (Ruegeria sp. (strain TM1040) (Silicibacter sp.)).